A 260-amino-acid polypeptide reads, in one-letter code: Lipid II isoglutaminyl synthase (glutamine-hydrolyzing) subunit GatD (260 aa).

A GATase cobBQ-type domain is found at 16–214; it reads QLNIAHLYGN…FHGPILSRNA (199 aa). C107 serves as the catalytic Nucleophile. A substrate-binding site is contributed by R142. Residue H206 is part of the active site.

The protein belongs to the CobB/CobQ family. GatD subfamily. Forms a heterodimer with MurT.

The catalysed reaction is beta-D-GlcNAc-(1-&gt;4)-Mur2Ac(oyl-L-Ala-gamma-D-Glu-L-Lys-D-Ala-D-Ala)-di-trans,octa-cis-undecaprenyl diphosphate + L-glutamine + ATP + H2O = beta-D-GlcNAc-(1-&gt;4)-Mur2Ac(oyl-L-Ala-D-isoglutaminyl-L-Lys-D-Ala-D-Ala)-di-trans,octa-cis-undecaprenyl diphosphate + L-glutamate + ADP + phosphate + H(+). It carries out the reaction L-glutamine + H2O = L-glutamate + NH4(+). The protein operates within cell wall biogenesis; peptidoglycan biosynthesis. Its function is as follows. The lipid II isoglutaminyl synthase complex catalyzes the formation of alpha-D-isoglutamine in the cell wall lipid II stem peptide. The GatD subunit catalyzes the hydrolysis of glutamine to glutamate and ammonia. The resulting ammonia molecule is channeled to the active site of MurT. This chain is Lipid II isoglutaminyl synthase (glutamine-hydrolyzing) subunit GatD, found in Streptococcus pneumoniae (strain ATCC BAA-255 / R6).